The sequence spans 91 residues: Cell division topological specificity factor (91 aa).

The protein belongs to the MinE family.

Functionally, prevents the cell division inhibition by proteins MinC and MinD at internal division sites while permitting inhibition at polar sites. This ensures cell division at the proper site by restricting the formation of a division septum at the midpoint of the long axis of the cell. The sequence is that of Cell division topological specificity factor from Gloeobacter violaceus (strain ATCC 29082 / PCC 7421).